Reading from the N-terminus, the 271-residue chain is Dermonecrotic toxin LhSicTox-alphaIA2aiv (271 aa).

Residue histidine 3 is part of the active site. Mg(2+)-binding residues include glutamate 23 and aspartate 25. Histidine 39 functions as the Nucleophile in the catalytic mechanism. 2 cysteine pairs are disulfide-bonded: cysteine 43-cysteine 49 and cysteine 45-cysteine 188. Aspartate 83 contacts Mg(2+).

It belongs to the arthropod phospholipase D family. Class II subfamily. Requires Mg(2+) as cofactor. Expressed by the venom gland.

The protein resides in the secreted. The enzyme catalyses an N-(acyl)-sphingosylphosphocholine = an N-(acyl)-sphingosyl-1,3-cyclic phosphate + choline. It catalyses the reaction an N-(acyl)-sphingosylphosphoethanolamine = an N-(acyl)-sphingosyl-1,3-cyclic phosphate + ethanolamine. It carries out the reaction a 1-acyl-sn-glycero-3-phosphocholine = a 1-acyl-sn-glycero-2,3-cyclic phosphate + choline. The catalysed reaction is a 1-acyl-sn-glycero-3-phosphoethanolamine = a 1-acyl-sn-glycero-2,3-cyclic phosphate + ethanolamine. Functionally, dermonecrotic toxins cleave the phosphodiester linkage between the phosphate and headgroup of certain phospholipids (sphingolipid and lysolipid substrates), forming an alcohol (often choline) and a cyclic phosphate. This toxin acts on sphingomyelin (SM). It may also act on ceramide phosphoethanolamine (CPE), lysophosphatidylcholine (LPC) and lysophosphatidylethanolamine (LPE), but not on lysophosphatidylserine (LPS), and lysophosphatidylglycerol (LPG). It acts by transphosphatidylation, releasing exclusively cyclic phosphate products as second products. Induces dermonecrosis, hemolysis, increased vascular permeability, edema, inflammatory response, and platelet aggregation. In Loxosceles hirsuta (Recluse spider), this protein is Dermonecrotic toxin LhSicTox-alphaIA2aiv.